We begin with the raw amino-acid sequence, 151 residues long: Large ribosomal subunit protein uL16 (151 aa).

Belongs to the universal ribosomal protein uL16 family. Part of the 50S ribosomal subunit.

Functionally, binds 23S rRNA and is also seen to make contacts with the A and possibly P site tRNAs. In Chloroflexus aurantiacus (strain ATCC 29364 / DSM 637 / Y-400-fl), this protein is Large ribosomal subunit protein uL16.